A 301-amino-acid polypeptide reads, in one-letter code: Nucleotide-binding protein Helmi_06460 (301 aa).

17 to 24 (GLSGAGKS) lines the ATP pocket. 68–71 (DIRG) is a GTP binding site.

This sequence belongs to the RapZ-like family.

Functionally, displays ATPase and GTPase activities. The protein is Nucleotide-binding protein Helmi_06460 of Heliobacterium modesticaldum (strain ATCC 51547 / Ice1).